The sequence spans 608 residues: MDLRHLLFTLALVCANDSLSASDDLLQWPQISKCRSPELETFSCYWTDGKVTTSGTIQLLYMKRSDEDWKECPDYITAGENSCYFNTSYTSIWIPYCVKLANKDEVFDEKCFSVDEIVLPDPPVHLNWTLLNTSQTGIHGDIQVRWDPPPTADVQKGWITLEYELQYKEVNETKWKELEPRLSTVVPLYSLKMGRDYEIRVRSRQRTSEKFGEFSEILYVSFTQAGIEFVHCAEEIEFPWFLVVVFGVCGLAVTAILILLSKQPRLKMLIFPPVPVPKIKGIDPDLLKKGKLDEVNSILASHDNYKTQLYNDDLWVEFIELDIDDSDEKNRVSDTDRLLSDDHLKSHSCLGAKDDDSGRASCYEPDIPETDFSASDTCDAISDIDQFKKVTEKEEDLLCLHRKDDVEALQSLANTDTQQPHTSTQSESRESWPPFADSTDSANPSVQTQLSNQNSLTNTDFYAQVSDITPAGSVVLSPGQKSKVGRAQCESCTEQNFTMDNAYFCEADVKKCIAVISQEEDEPRVQEQSCNEDTYFTTESLTTTGINLGASMAETPSMEMPVPDYTSIHIVHSPQGLVLNATALPVPEKEFNMSCGYVSTDQLNKIMP.

The first 16 residues, 1–16 (MDLRHLLFTLALVCAN), serve as a signal peptide directing secretion. At 17 to 237 (DSLSASDDLL…EFVHCAEEIE (221 aa)) the chain is on the extracellular side. 2 disulfides stabilise this stretch: C34-C44 and C72-C83. Residue N86 is glycosylated (N-linked (GlcNAc...) asparagine). Residues C97 and C111 are joined by a disulfide bond. The region spanning 122-226 (PPVHLNWTLL…ILYVSFTQAG (105 aa)) is the Fibronectin type-III domain. Residues N127, N132, and N171 are each glycosylated (N-linked (GlcNAc...) asparagine). The WSXWS motif signature appears at 211-215 (FGEFS). A helical membrane pass occupies residues 238–261 (FPWFLVVVFGVCGLAVTAILILLS). The Cytoplasmic portion of the chain corresponds to 262 to 608 (KQPRLKMLIF…STDQLNKIMP (347 aa)). Residues 267–352 (KMLIFPPVPV…HLKSHSCLGA (86 aa)) form a required for JAK2 binding region. Residues 270-278 (IFPPVPVPK) carry the Box 1 motif motif. The UbE motif motif lies at 313–322 (DLWVEFIELD). Composition is skewed to polar residues over residues 413 to 426 (ANTD…STQS) and 438 to 451 (STDS…TQLS). The segment at 413–451 (ANTDTQQPHTSTQSESRESWPPFADSTDSANPSVQTQLS) is disordered.

It belongs to the type I cytokine receptor family. Type 1 subfamily. In terms of processing, on GH binding, proteolytically cleaved, in vitro, to produce GHBP. As to expression, broad specificity.

It localises to the cell membrane. It is found in the secreted. Its function is as follows. Receptor for pituitary gland growth hormone (GH1) involved in regulating postnatal body growth. On ligand binding, couples to the JAK2/STAT5 pathway. In terms of biological role, the soluble form (GHBP) acts as a reservoir of growth hormone in plasma and may be a modulator/inhibitor of GH signaling. In Gallus gallus (Chicken), this protein is Growth hormone receptor (GHR).